The sequence spans 78 residues: UPF0349 protein YuzB (78 aa).

It belongs to the UPF0349 family.

This Bacillus subtilis (strain 168) protein is UPF0349 protein YuzB (yuzB).